The primary structure comprises 210 residues: Redox-sensing transcriptional repressor Rex (210 aa).

A DNA-binding region (H-T-H motif) is located at residues 17–56; that stretch reads KYHRYLYELLKNDVDRISSKELSEKIGFTASQIRQDLNCF. 91-96 contributes to the NAD(+) binding site; sequence GAGNIG.

This sequence belongs to the transcriptional regulatory Rex family. Homodimer.

Its subcellular location is the cytoplasm. In terms of biological role, modulates transcription in response to changes in cellular NADH/NAD(+) redox state. The polypeptide is Redox-sensing transcriptional repressor Rex (Clostridium botulinum (strain ATCC 19397 / Type A)).